A 384-amino-acid chain; its full sequence is Lipid-A-disaccharide synthase (384 aa).

The protein belongs to the LpxB family.

The enzyme catalyses a lipid X + a UDP-2-N,3-O-bis[(3R)-3-hydroxyacyl]-alpha-D-glucosamine = a lipid A disaccharide + UDP + H(+). Its pathway is bacterial outer membrane biogenesis; LPS lipid A biosynthesis. In terms of biological role, condensation of UDP-2,3-diacylglucosamine and 2,3-diacylglucosamine-1-phosphate to form lipid A disaccharide, a precursor of lipid A, a phosphorylated glycolipid that anchors the lipopolysaccharide to the outer membrane of the cell. The protein is Lipid-A-disaccharide synthase of Geobacter sulfurreducens (strain ATCC 51573 / DSM 12127 / PCA).